The sequence spans 281 residues: Energy-coupling factor transporter ATP-binding protein EcfA2 (281 aa).

Residues 3–242 (IKVTGLTYVY…TETLEEIGLA (240 aa)) form the ABC transporter domain. 40–47 (GHTGSGKS) provides a ligand contact to ATP.

This sequence belongs to the ABC transporter superfamily. Energy-coupling factor EcfA family. In terms of assembly, forms a stable energy-coupling factor (ECF) transporter complex composed of 2 membrane-embedded substrate-binding proteins (S component), 2 ATP-binding proteins (A component) and 2 transmembrane proteins (T component).

It is found in the cell membrane. In terms of biological role, ATP-binding (A) component of a common energy-coupling factor (ECF) ABC-transporter complex. Unlike classic ABC transporters this ECF transporter provides the energy necessary to transport a number of different substrates. The polypeptide is Energy-coupling factor transporter ATP-binding protein EcfA2 (Acetivibrio thermocellus (strain ATCC 27405 / DSM 1237 / JCM 9322 / NBRC 103400 / NCIMB 10682 / NRRL B-4536 / VPI 7372) (Clostridium thermocellum)).